We begin with the raw amino-acid sequence, 169 residues long: NAD(P)H-quinone oxidoreductase subunit J, chloroplastic (169 aa).

It belongs to the complex I 30 kDa subunit family. As to quaternary structure, NDH is composed of at least 16 different subunits, 5 of which are encoded in the nucleus.

The protein localises to the plastid. The protein resides in the chloroplast thylakoid membrane. It catalyses the reaction a plastoquinone + NADH + (n+1) H(+)(in) = a plastoquinol + NAD(+) + n H(+)(out). It carries out the reaction a plastoquinone + NADPH + (n+1) H(+)(in) = a plastoquinol + NADP(+) + n H(+)(out). NDH shuttles electrons from NAD(P)H:plastoquinone, via FMN and iron-sulfur (Fe-S) centers, to quinones in the photosynthetic chain and possibly in a chloroplast respiratory chain. The immediate electron acceptor for the enzyme in this species is believed to be plastoquinone. Couples the redox reaction to proton translocation, and thus conserves the redox energy in a proton gradient. The polypeptide is NAD(P)H-quinone oxidoreductase subunit J, chloroplastic (Physcomitrium patens (Spreading-leaved earth moss)).